The chain runs to 497 residues: Acetyl-coenzyme A carboxylase carboxyl transferase subunit beta, chloroplastic (497 aa).

The region spanning 230–497 (LWVQCENCYG…FFPLNQNSIK (268 aa)) is the CoA carboxyltransferase N-terminal domain. Positions 234, 237, 253, and 256 each coordinate Zn(2+). A C4-type zinc finger spans residues 234–256 (CENCYGLNYKKFLKSKMNICEQC).

Belongs to the AccD/PCCB family. Acetyl-CoA carboxylase is a heterohexamer composed of biotin carboxyl carrier protein, biotin carboxylase and 2 subunits each of ACCase subunit alpha and ACCase plastid-coded subunit beta (accD). The cofactor is Zn(2+).

It localises to the plastid. Its subcellular location is the chloroplast stroma. It catalyses the reaction N(6)-carboxybiotinyl-L-lysyl-[protein] + acetyl-CoA = N(6)-biotinyl-L-lysyl-[protein] + malonyl-CoA. It participates in lipid metabolism; malonyl-CoA biosynthesis; malonyl-CoA from acetyl-CoA: step 1/1. Its function is as follows. Component of the acetyl coenzyme A carboxylase (ACC) complex. Biotin carboxylase (BC) catalyzes the carboxylation of biotin on its carrier protein (BCCP) and then the CO(2) group is transferred by the transcarboxylase to acetyl-CoA to form malonyl-CoA. The protein is Acetyl-coenzyme A carboxylase carboxyl transferase subunit beta, chloroplastic of Carica papaya (Papaya).